The sequence spans 1151 residues: Importin beta (1151 aa).

HEAT repeat units lie at residues 1–36 (MDLA…KQEE), 37–82 (PASY…GNGN), 83–132 (PECV…VAQF), 133–175 (PEFF…TKIG), 176–222 (GKAI…DSVI), 223–269 (PNSV…AVLK), 270–316 (PMVK…RAKK), 317–377 (AISE…KVIF), 378–416 (PLIK…LVTK), 417–453 (EDIV…EDYA), 454–495 (PTFQ…HLKK), 496–540 (AETY…LKND), 541–593 (FADM…AGTL), 594–642 (PQLF…PETF), 643–704 (PKYM…MRKT), 705–756 (PAAF…TVAS), 757–811 (PPAV…SYTE), 812–880 (TVNK…ALGD), 881–932 (LSLD…KYLS), 933–978 (PANS…YEGD), 979–1027 (PGLA…AQAF), 1028–1074 (PTEL…ARND), 1075–1120 (PNFM…VLTQ), and 1121–1151 (IAGH…SVRQ).

The protein belongs to the importin beta family.

Its subcellular location is the nucleus intermembrane space. It is found in the cytoplasm. The protein resides in the nucleus. Functions in nuclear protein import as nuclear transport receptor. Involved in encystation process. Constitutive expression enhances cyst production and increases transcription of endogenous genes involved in encystation. Level of mRNA of the transcriptional factor myb1-like protein increases in early stages of the encystation process followed by increased mRNAs of the cyst wall proteins cwp1-3. This Giardia intestinalis (strain ATCC 50803 / WB clone C6) (Giardia lamblia) protein is Importin beta.